The chain runs to 432 residues: D-amino acid dehydrogenase (432 aa).

3–17 (VVILGSGVVGVASAW) contributes to the FAD binding site.

Belongs to the DadA oxidoreductase family. Requires FAD as cofactor.

The catalysed reaction is a D-alpha-amino acid + A + H2O = a 2-oxocarboxylate + AH2 + NH4(+). It functions in the pathway amino-acid degradation; D-alanine degradation; NH(3) and pyruvate from D-alanine: step 1/1. Oxidative deamination of D-amino acids. The chain is D-amino acid dehydrogenase from Shigella boydii serotype 4 (strain Sb227).